Consider the following 246-residue polypeptide: Agamous-like MADS-box protein AGL5 (246 aa).

The region spanning 18–72 (RGKIEIKRIENTTNRQVTFCKRRNGLLKKAYELSVLCDAEVALVIFSTRGRLYEY) is the MADS-box domain. The K-box domain occupies 102-192 (TQYYQQEASK…RSKITERTGL (91 aa)).

Interacts with AGL15 and AGL16.

It is found in the nucleus. Its function is as follows. Probable transcription factor. Interacts genetically with TT16/AGL32 in a partially antagonistic manner during flower development. Is essential for the coordination of cell divisions in ovule, seed coat development and endosperm formation. This Arabidopsis thaliana (Mouse-ear cress) protein is Agamous-like MADS-box protein AGL5 (AGL5).